Reading from the N-terminus, the 438-residue chain is Minor capsid protein p49 (438 aa).

Positions 134–167 (PQVSGLKDTQKNCLTQPSSLPSLKNPKNSSVPST) are disordered. Residues 144 to 167 (KNCLTQPSSLPSLKNPKNSSVPST) show a composition bias toward polar residues.

This sequence belongs to the asfivirus p49 structural protein family.

It is found in the virion. Together with the penton and the other minor capsid proteins (M1249L, p17), forms a complicated network immediately below the outer capsid shell, stabilizing the whole capsid. Plays an essential role in the formation of infectious virus particles. Especially required for the formation of the capsid vertices. During virion assembly, associates with the membrane and probably mediates the docking of the penton complex to the inner membrane, where it recruits the capsomers to form the penton core. This Ornithodoros (relapsing fever ticks) protein is Minor capsid protein p49.